Consider the following 195-residue polypeptide: Peptide methionine sulfoxide reductase MsrA 2 (195 aa).

Cys18 is a catalytic residue.

The protein belongs to the MsrA Met sulfoxide reductase family.

The catalysed reaction is L-methionyl-[protein] + [thioredoxin]-disulfide + H2O = L-methionyl-(S)-S-oxide-[protein] + [thioredoxin]-dithiol. The enzyme catalyses [thioredoxin]-disulfide + L-methionine + H2O = L-methionine (S)-S-oxide + [thioredoxin]-dithiol. Functionally, has an important function as a repair enzyme for proteins that have been inactivated by oxidation. Catalyzes the reversible oxidation-reduction of methionine sulfoxide in proteins to methionine. The sequence is that of Peptide methionine sulfoxide reductase MsrA 2 (msrA2) from Mesorhizobium japonicum (strain LMG 29417 / CECT 9101 / MAFF 303099) (Mesorhizobium loti (strain MAFF 303099)).